A 1286-amino-acid chain; its full sequence is MASESGLNGDPNILEEVSETKRDKEEEEEVKKTEKKDEEHEKTKTVPFYKLFAFADSFDFLLMILGTLGSIGNGLGFPLMTLLFGDLIDAFGENQTNTTDKVSKVALKFVWLGIGTFAAAFLQLSGWMISGERQAARIRSLYLKTILRQDIAFFDIDTNTGEVVGRMSGDTVLIQDAMGEKVGKAIQLLATFVGGFVIAFVRGWLLTLVMLSSIPLLVMAGALLAIVIAKTASRGQTAYAKAATVVEQTIGSIRTVASFTGEKQAISNYNKHLVTAYKAGVIEGGSTGLGLGTLFLVVFCSYALAVWYGGKLILDKGYTGGQVLNIIIAVLTGSMSLGQTSPCLSAFAAGQAAAYKMFETIERRPNIDSYSTNGKVLDDIKGDIELKDVYFTYPARPDEQIFRGFSLFISSGTTVALVGQSGSGKSTVVSLIERFYDPQAGDVLIDGINLKEFQLKWIRSKIGLVSQEPVLFTASIKDNIAYGKEDATTEEIKAAAELANASKFVDKLPQGLDTMVGEHGTQLSGGQKQRIAVARAILKDPRILLLDEATSALDAESERVVQEALDRIMVNRTTVVVAHRLSTVRNADMIAVIHQGKIVEKGSHTELLKDPEGAYSQLIRLQEEKKSDENAAEEQKMSSIESFKQSSLRKSSLGRSLSKGGSSRGNSSRHSFNMFGFPAGIDGNVVQDQEEDDTTQPKTEPKKVSIFRIAALNKPEIPVLILGSISAAANGVILPIFGILISSVIKAFFQPPKKLKEDTSFWAIIFMVLGFASIIAYPAQTFFFAIAGCKLVQRIRSMCFEKVVHMEVGWFDEPENSSGTIGARLSADAATIRGLVGDSLAQTVQNLSSILAGLIIAFLACWQLAFVVLAMLPLIALNGFLYMKFMKGFSADAKKMYGEASQVANDAVGSIRTVASFCAEDKVMNMYSKKCEGPMKNGIRQGIVSGIGFGFSFFVLFSSYAASFYVGARLVDDGKTTFDSVFRVFFALTMAAMAISQSSSLSPDSSKADVAAASIFAIMDRESKIDPSVESGRVLDNVKGDIELRHVSFKYPARPDVQIFQDLCLSIRAGKTVALVGESGSGKSTVIALLQRFYDPDSGEITLDGVEIKSLRLKWLRQQTGLVSQEPILFNETIRANIAYGKGGDASESEIVSSAELSNAHGFISGLQQGYDTMVGERGIQLSGGQKQRVAIARAIVKDPKVLLLDEATSALDAESERVVQDALDRVMVNRTTIVVAHRLSTIKNADVIAVVKNGVIVEKGKHDTLINIKDGVYASLVQLHLTAAS.

Residues 1–39 (MASESGLNGDPNILEEVSETKRDKEEEEEVKKTEKKDEE) are disordered. Positions 18 to 39 (SETKRDKEEEEEVKKTEKKDEE) are enriched in basic and acidic residues. The chain crosses the membrane as a helical span at residues 60-80 (FLLMILGTLGSIGNGLGFPLM). The region spanning 63–349 (MILGTLGSIG…TSPCLSAFAA (287 aa)) is the ABC transmembrane type-1 1 domain. N-linked (GlcNAc...) asparagine glycans are attached at residues Asn-94 and Asn-97. Transmembrane regions (helical) follow at residues 109-129 (FVWLGIGTFAAAFLQLSGWMI), 186-206 (IQLLATFVGGFVIAFVRGWLL), 208-228 (LVMLSSIPLLVMAGALLAIVI), 288-308 (GLGLGTLFLVVFCSYALAVWY), and 317-337 (GYTGGQVLNIIIAVLTGSMSL). The 237-residue stretch at 384-620 (IELKDVYFTY…PEGAYSQLIR (237 aa)) folds into the ABC transporter 1 domain. 419–426 (GQSGSGKS) contributes to the ATP binding site. 2 N-linked (GlcNAc...) asparagine glycosylation sites follow: Asn-500 and Asn-571. Residues 625–636 (KKSDENAAEEQK) are compositionally biased toward basic and acidic residues. Positions 625-669 (KKSDENAAEEQKMSSIESFKQSSLRKSSLGRSLSKGGSSRGNSSR) are disordered. Positions 646–669 (SSLRKSSLGRSLSKGGSSRGNSSR) are enriched in low complexity. N-linked (GlcNAc...) asparagine glycosylation occurs at Asn-666. Ser-671 bears the Phosphoserine mark. Residues 720–1007 (LILGSISAAA…SSSLSPDSSK (288 aa)) enclose the ABC transmembrane type-1 2 domain. A run of 2 helical transmembrane segments spans residues 721-741 (ILGSISAAANGVILPIFGILI) and 764-784 (IIFMVLGFASIIAYPAQTFFF). 2 N-linked (GlcNAc...) asparagine glycosylation sites follow: Asn-816 and Asn-846. Helical transmembrane passes span 850–870 (ILAGLIIAFLACWQLAFVVLA), 871–891 (MLPLIALNGFLYMKFMKGFSA), 942–962 (GIVSGIGFGFSFFVLFSSYAA), and 976–996 (TTFDSVFRVFFALTMAAMAIS). Residues 1042–1279 (IELRHVSFKY…KDGVYASLVQ (238 aa)) form the ABC transporter 2 domain. Residue 1077–1084 (GESGSGKS) participates in ATP binding. Asn-1131 and Asn-1230 each carry an N-linked (GlcNAc...) asparagine glycan.

Belongs to the ABC transporter superfamily. ABCB family. Multidrug resistance exporter (TC 3.A.1.201) subfamily. In terms of assembly, interacts with 1-naphthylphthalamic acid (NPA). Post-translationally, phosphorylation level varies significantly during early response to bacterial elicitor. As to expression, mostly expressed in roots, especially in the root elongation zone and lateral roots. In mature portion of the root, expressed in the epidermis and cortex. In the root elongation zone, confined to epidermis. In root tips, present in the root cap, S3 columella and epidermal cells.

Its subcellular location is the cell membrane. Auxin influx transporter that mediates the transport of auxin in roots. Contributes to the basipetal transport in hypocotyls and root tips by establishing an auxin uptake sink in the root cap. Confers sensitivity to 1-N-naphthylphthalamic acid (NPA). Regulates the root elongation, the initiation of lateral roots and the development of root hairs. Can transport IAA, indole-3-propionic acid, NPA syringic acid, vanillic acid and some auxin metabolites, but not 2,4-D and 1-naphthaleneacetic acid. The protein is ABC transporter B family member 4 (ABCB4) of Arabidopsis thaliana (Mouse-ear cress).